A 510-amino-acid chain; its full sequence is GMP synthase [glutamine-hydrolyzing] (510 aa).

Positions 5–195 (LVLILDFGGQ…LYEVCHCQGD (191 aa)) constitute a Glutamine amidotransferase type-1 domain. Catalysis depends on Cys82, which acts as the Nucleophile. Residues His169 and Glu171 contribute to the active site. Positions 196 to 385 (WTMENYIEKE…LGVPEEIVWR (190 aa)) constitute a GMPS ATP-PPase domain. 223–229 (SGGVDSS) lines the ATP pocket.

In terms of assembly, homodimer.

The catalysed reaction is XMP + L-glutamine + ATP + H2O = GMP + L-glutamate + AMP + diphosphate + 2 H(+). It functions in the pathway purine metabolism; GMP biosynthesis; GMP from XMP (L-Gln route): step 1/1. Functionally, catalyzes the synthesis of GMP from XMP. The chain is GMP synthase [glutamine-hydrolyzing] from Alkaliphilus metalliredigens (strain QYMF).